The primary structure comprises 185 residues: MELKGTTILAVRDADGVAMAGDGQVTMGQSVVMKHTARKVRRLYRDRVLAGFAGATADAFTLFERFEAKLEEFGGNLTRAAVELAKDWRKDKYLRRLEAMLLVADAETILILTGTGDVIEPDDGIAAIGSGGPYALSAARALSRHTTLDAETVVREAMAVAGELCVFTNGHLTVETLRRNGGATT.

Residue Thr6 is part of the active site. Na(+) contacts are provided by Gly162, Cys165, and Thr168.

It belongs to the peptidase T1B family. HslV subfamily. A double ring-shaped homohexamer of HslV is capped on each side by a ring-shaped HslU homohexamer. The assembly of the HslU/HslV complex is dependent on binding of ATP.

The protein localises to the cytoplasm. The catalysed reaction is ATP-dependent cleavage of peptide bonds with broad specificity.. Allosterically activated by HslU binding. Its function is as follows. Protease subunit of a proteasome-like degradation complex believed to be a general protein degrading machinery. The sequence is that of ATP-dependent protease subunit HslV from Nitratidesulfovibrio vulgaris (strain DSM 19637 / Miyazaki F) (Desulfovibrio vulgaris).